Consider the following 154-residue polypeptide: UPF0225 protein Spro_2712 (154 aa).

This sequence belongs to the UPF0225 family.

In Serratia proteamaculans (strain 568), this protein is UPF0225 protein Spro_2712.